The chain runs to 882 residues: Cadherin-1 (882 aa).

A signal peptide spans 1–22 (MGPWSRSLSALLLLLQVSSWLC). Residues 23–154 (QEPEPCHPGF…SSSGLRRRKR (132 aa)) constitute a propeptide that is removed on maturation. Asn144 is a glycosylation site (N-linked (GlcNAc...) asparagine). Cadherin domains follow at residues 155–262 (DWVI…KPEF), 263–375 (TQEV…PPVF), 376–486 (NPTT…APIF), 487–593 (VPPE…DNAP), and 594–697 (IPEP…VCKK). Over 155–709 (DWVIPPISCP…PIEAGLQIPA (555 aa)) the chain is Extracellular. Asp257 is a binding site for Ca(2+). The O-linked (Man...) serine glycan is linked to Ser280. O-linked (Man...) threonine glycosylation occurs at Thr285. Asp288 contributes to the Ca(2+) binding site. 4 O-linked (Man...) threonine glycosylation sites follow: Thr358, Thr470, Thr472, and Thr509. Asn558 carries an N-linked (GlcNAc...) asparagine glycan. Residues Thr576, Thr578, and Thr580 are each glycosylated (O-linked (Man...) threonine). Asn637 carries an N-linked (GlcNAc...) asparagine glycan. The chain crosses the membrane as a helical span at residues 710–730 (ILGILGGILALLILILLLLLF). The Cytoplasmic segment spans residues 731 to 882 (LRRRAVVKEP…ADMYGGGEDD (152 aa)). The disordered stretch occupies residues 747–767 (DTRDNVYYYDEEGGGEEDQDF). Phosphotyrosine; by SRC is present on residues Tyr753, Tyr754, and Tyr755. Acidic residues predominate over residues 755-767 (YDEEGGGEEDQDF). Residues 758 to 769 (EGGGEEDQDFDL) form a required for binding CTNND1 and PSEN1 region. A phosphoserine mark is found at Ser770, Ser793, Ser838, Ser840, and Ser846. Residues 811–882 (IDENLKAADT…ADMYGGGEDD (72 aa)) form a required for binding alpha, beta and gamma catenins region.

Homodimer; disulfide-linked. Component of an E-cadherin/ catenin adhesion complex composed of at least E-cadherin/CDH1, beta-catenin/CTNNB1 or gamma-catenin/JUP, and potentially alpha-catenin/CTNNA1; the complex is located to adherens junctions. Found in a complex composed of CDH1, RAP1A and PKP3; PKP3 acts as a scaffold protein within the complex, the complex is required for CDH1 localization to mature desmosome cell junctions. Interacts with the TRPV4 and CTNNB1 complex. Interacts with CTNND1. The stable association of CTNNA1 is controversial as CTNNA1 was shown not to bind to F-actin when assembled in the complex. Alternatively, the CTNNA1-containing complex may be linked to F-actin by other proteins such as LIMA1. Interaction with PSEN1, cleaves CDH1 resulting in the disassociation of cadherin-based adherens junctions (CAJs). Interacts with AJAP1 and DLGAP5. Interacts with TBC1D2. Interacts with LIMA1. Interacts with CAV1. Interacts with PIP5K1C. Interacts with RAB8B. Interacts with DDR1; this stabilizes CDH1 at the cell surface and inhibits its internalization. Interacts with RAPGEF2. Interacts with KLRG1. Forms a ternary complex composed of ADAM10, CADH1 and EPHA4; within the complex, CADH1 is cleaved by ADAM10 which disrupts adherens junctions. Interacts with SPEF1. Interacts with CTNNB1 and PKP2. Interacts with AMOTL2; the interaction may facilitate binding of radial actin fibers to cell junction complexes. Interacts with DSG3; the interaction is required for CDH1 localization to developing adherens junctions. In terms of processing, during apoptosis or with calcium influx, cleaved by a membrane-bound metalloproteinase (ADAM10), PS1/gamma-secretase and caspase-3. Processing by the metalloproteinase, induced by calcium influx, causes disruption of cell-cell adhesion and the subsequent release of beta-catenin into the cytoplasm. The residual membrane-tethered cleavage product is rapidly degraded via an intracellular proteolytic pathway. Cleavage by caspase-3 releases the cytoplasmic tail resulting in disintegration of the actin microfilament system. The gamma-secretase-mediated cleavage promotes disassembly of adherens junctions. During development of the cochlear organ of Corti, cleavage by ADAM10 at adherens junctions promotes pillar cell separation. Post-translationally, N-glycosylation at Asn-637 is essential for expression, folding and trafficking. Addition of bisecting N-acetylglucosamine by MGAT3 modulates its cell membrane location. Ubiquitinated by a SCF complex containing SKP2, which requires prior phosphorylation by CK1/CSNK1A1. Ubiquitinated by CBLL1/HAKAI, requires prior phosphorylation at Tyr-754. In terms of processing, O-glycosylated. O-manosylated by TMTC1, TMTC2, TMTC3 or TMTC4. Thr-285 and Thr-509 are O-mannosylated by TMTC2 or TMTC4 but not TMTC1 or TMTC3.

The protein localises to the cell junction. It localises to the adherens junction. Its subcellular location is the cell membrane. The protein resides in the endosome. It is found in the golgi apparatus. The protein localises to the trans-Golgi network. It localises to the cytoplasm. Its subcellular location is the desmosome. Its function is as follows. Cadherins are calcium-dependent cell adhesion proteins. They preferentially interact with themselves in a homophilic manner in connecting cells; cadherins may thus contribute to the sorting of heterogeneous cell types. CDH1 is involved in mechanisms regulating cell-cell adhesions, mobility and proliferation of epithelial cells. Promotes organization of radial actin fiber structure and cellular response to contractile forces, via its interaction with AMOTL2 which facilitates anchoring of radial actin fibers to CDH1 junction complexes at the cell membrane. Plays a role in the early stages of desmosome cell-cell junction formation via facilitating the recruitment of DSG2 and DSP to desmosome plaques. Has a potent invasive suppressor role. It is a ligand for integrin alpha-E/beta-7. E-Cad/CTF2 promotes non-amyloidogenic degradation of Abeta precursors. Has a strong inhibitory effect on APP C99 and C83 production. The chain is Cadherin-1 (CDH1) from Pongo abelii (Sumatran orangutan).